A 415-amino-acid chain; its full sequence is Multifunctional CCA protein (415 aa).

Residues Gly8 and Arg11 each contribute to the ATP site. The CTP site is built by Gly8 and Arg11. Mg(2+) is bound by residues Asp21 and Asp23. Positions 91, 143, and 146 each coordinate ATP. Residues Arg91, Arg143, and Arg146 each contribute to the CTP site. Positions 232–333 constitute an HD domain; sequence TGVHVMMVID…VRLLERCDAL (102 aa).

Belongs to the tRNA nucleotidyltransferase/poly(A) polymerase family. Bacterial CCA-adding enzyme type 1 subfamily. In terms of assembly, monomer. Can also form homodimers and oligomers. The cofactor is Mg(2+). It depends on Ni(2+) as a cofactor.

It catalyses the reaction a tRNA precursor + 2 CTP + ATP = a tRNA with a 3' CCA end + 3 diphosphate. The enzyme catalyses a tRNA with a 3' CCA end + 2 CTP + ATP = a tRNA with a 3' CCACCA end + 3 diphosphate. Catalyzes the addition and repair of the essential 3'-terminal CCA sequence in tRNAs without using a nucleic acid template. Adds these three nucleotides in the order of C, C, and A to the tRNA nucleotide-73, using CTP and ATP as substrates and producing inorganic pyrophosphate. tRNA 3'-terminal CCA addition is required both for tRNA processing and repair. Also involved in tRNA surveillance by mediating tandem CCA addition to generate a CCACCA at the 3' terminus of unstable tRNAs. While stable tRNAs receive only 3'-terminal CCA, unstable tRNAs are marked with CCACCA and rapidly degraded. The chain is Multifunctional CCA protein from Cupriavidus taiwanensis (strain DSM 17343 / BCRC 17206 / CCUG 44338 / CIP 107171 / LMG 19424 / R1) (Ralstonia taiwanensis (strain LMG 19424)).